A 393-amino-acid chain; its full sequence is Phosphoglycerate kinase (393 aa).

Residues 21–23, R36, 59–62, R114, and R147 contribute to the substrate site; these read DLN and HLGR. ATP contacts are provided by residues K198, E320, and 346-349; that span reads GGDT.

Belongs to the phosphoglycerate kinase family. In terms of assembly, monomer.

It localises to the cytoplasm. The enzyme catalyses (2R)-3-phosphoglycerate + ATP = (2R)-3-phospho-glyceroyl phosphate + ADP. Its pathway is carbohydrate degradation; glycolysis; pyruvate from D-glyceraldehyde 3-phosphate: step 2/5. The sequence is that of Phosphoglycerate kinase from Methylobacillus flagellatus (strain ATCC 51484 / DSM 6875 / VKM B-1610 / KT).